Here is a 273-residue protein sequence, read N- to C-terminus: Cysteine protease S273R (273 aa).

Catalysis depends on residues H168 and N187. Q226 is a binding site for substrate. Catalysis depends on C232, which acts as the Nucleophile.

Belongs to the peptidase C63 family.

The protein resides in the host cytoplasm. It is found in the virion. In terms of biological role, cysteine protease that plays several role during infection including processing of the structural polyprotein or inhibition of the host immune response. Catalyzes the maturation of the pp220 and pp62 polyprotein precursors into core-shell proteins. Plays a role in the disruption of host pyroptosis via specific cleavage of gasdermin D/GSDMD. In addition, strongly decreases the host cGAS-STING signaling by targeting IKBKE via its enzymatic activity. Also impairs host FOXJ1-mediated antiviral effect via degradation of FOXJ1. Cleaves host G3BP1 inducing loss of stress granules formation. Interacts with and induces the degradation of host STAT2 via polyubiquitination of the latter. The polypeptide is Cysteine protease S273R (Ornithodoros (relapsing fever ticks)).